A 491-amino-acid polypeptide reads, in one-letter code: MNRTKGDEEEYWNSSKFKAFTFDDEDDELSQLKESKRAVNSLRDIVDDDDDDDLERVSWTGEPVGSISWSIKETAGSSGSTPEGREQLKGRNSFYTQLPKPPSTYSLSSFFRGRTRPGSFQSLSDALSDTPAKSYAPELGRPKGEYRDYSNDWSLSDTVQRLRRGKVCSLERFRSLQDKLQLLEEAVSMHDGNVITAVLIFLKRTLSKEILFRELEVRQVALRHLIHFLKEIGDQKLLLDLFRFLDRAEELALSHYREHLNIQDPEKRKEFLKTCIGLPFSAEDAAHVQDHYTLLERQIIIEANDRHLESSGQTDIFRKHPRKASILNMPLVTTLFYACFYHYTESEGTFSSPINLKKTFKIPDKQYVLTALAARAKLRAWNDVDALFTTKNWLGYTKKRAPIGFHRVVEILHKNSAPVQILQEYVNLVEDVDTKLNLATKFKCHDVVIDTCRDLKDRQQLLAYRSKVDKGSAEEEKIDAILSSSQIRWKN.

Residue Thr21 is modified to Phosphothreonine. Polar residues predominate over residues Lys72–Thr81. Positions Lys72 to Pro101 are disordered. Phosphothreonine is present on Thr115. A phosphoserine mark is found at Ser119, Ser122, and Ser128. Residues Gln121 to Arg141 form a disordered region. Thr130 carries the phosphothreonine modification.

It belongs to the SPE39 family. Interacts with VPS33B. Associates with the homotypic fusion and vacuole protein sorting (HOPS) complex; impaired by VPS33B. Interacts with RAB11A.

It localises to the cytoplasm. It is found in the cytoplasmic vesicle. The protein resides in the early endosome. Its subcellular location is the recycling endosome. The protein localises to the late endosome. Its function is as follows. Proposed to be involved in endosomal maturation implicating in part VPS33B. In epithelial cells, the VPS33B:VIPAS39 complex may play a role in the apical RAB11A-dependent recycling pathway and in the maintenance of the apical-basolateral polarity. May play a role in lysosomal trafficking, probably via association with the core HOPS complex in a discrete population of endosomes; the functions seems to be independent of VPS33B. May play a role in vesicular trafficking during spermatogenesis. May be involved in direct or indirect transcriptional regulation of E-cadherin. This is Spermatogenesis-defective protein 39 homolog (Vipas39) from Mus musculus (Mouse).